We begin with the raw amino-acid sequence, 346 residues long: N(4)-(beta-N-acetylglucosaminyl)-L-asparaginase (346 aa).

A signal peptide spans 1-23; the sequence is MERKSNLSLLLLLLVLGMPLVRG. The N-linked (GlcNAc...) asparagine glycan is linked to asparagine 38. Intrachain disulfides connect cysteine 64–cysteine 69 and cysteine 163–cysteine 179. Residue threonine 206 is the Nucleophile of the active site. Residues 234 to 237 and 257 to 260 contribute to the substrate site; these read RVGD and TGDG. Cysteine 286 and cysteine 306 are joined by a disulfide. Asparagine 310 carries an N-linked (GlcNAc...) asparagine glycan. Cysteine 317 and cysteine 345 are disulfide-bonded.

The protein belongs to the Ntn-hydrolase family. In terms of assembly, heterotetramer of two alpha and two beta chains arranged as a dimer of alpha/beta heterodimers. In terms of processing, cleaved into an alpha and beta chain by autocatalysis; this activates the enzyme. The N-terminal residue of the beta subunit is responsible for the nucleophile hydrolase activity. N-glycosylated.

The protein localises to the lysosome. The enzyme catalyses N(4)-(beta-N-acetyl-D-glucosaminyl)-L-asparagine + H2O = N-acetyl-beta-D-glucosaminylamine + L-aspartate + H(+). Cleaves the GlcNAc-Asn bond which joins oligosaccharides to the peptide of asparagine-linked glycoproteins. The polypeptide is N(4)-(beta-N-acetylglucosaminyl)-L-asparaginase (Aga) (Mus musculus (Mouse)).